The chain runs to 778 residues: Transcription factor kayak (778 aa).

Low complexity-rich tracts occupy residues 24–54 and 77–98; these read AQQL…HTQQ and QYYQ…QRQL. Disordered stretches follow at residues 24–57, 76–130, 183–223, 294–320, 356–414, and 427–478; these read AQQL…QNGL, NQYY…HQLR, QPTA…TTNG, APLV…VLAS, ASVM…GTGG, and RNTN…RKRR. Over residues 99–108 the composition is skewed to polar residues; sequence PTQQPAASYE. Low complexity-rich tracts occupy residues 109–130 and 183–222; these read QQQQ…HQLR and QPTA…TTTN. A compositionally biased stretch (low complexity) spans 382–402; sequence ISDTSSGATDSTSYQNGHMMG. Residues 403–414 are compositionally biased toward gly residues; sequence NSGGGNGGGTGG. Positions 427–436 are enriched in polar residues; the sequence is RNTNTSNSAT. The bZIP domain occupies 457-520; that stretch reads EEKRRIRRER…NQLEYFLQAH (64 aa). Positions 459–478 are basic motif; that stretch reads KRRIRRERNKQAAARCRKRR. The leucine-zipper stretch occupies residues 485-513; that stretch reads LTEEVELLEKRGENLKKEMELLNETKNQL. Residues 550 to 571 are compositionally biased toward low complexity; sequence GSCGSGSSHHNNNSNSNDSSSG. Disordered stretches follow at residues 550 to 594 and 756 to 778; these read GSCG…DLKP and TSQN…LVSL. The span at 579–589 shows a compositional bias: polar residues; it reads TLNSTGRSNSP. The residue at position 588 (Ser588) is a Phosphoserine.

It belongs to the bZIP family. Fos subfamily. In terms of assembly, homodimer. Heterodimer with Jra. The kay-Jra heterodimer binds more stably to the AP-1 site than either of the two proteins alone.

Its subcellular location is the nucleus. Its function is as follows. Developmentally regulated transcription factor AP-1 binds and recognizes the enhancer DNA sequence: 5'-TGA[CG]TCA-3'. May play a role in the function or determination of a particular subset of cells in the developing embryo. It is able to carry out its function either independently of or in conjunction with Jra. In Drosophila pseudoobscura pseudoobscura (Fruit fly), this protein is Transcription factor kayak.